A 192-amino-acid chain; its full sequence is FAD-linked sulfhydryl oxidase erv2 (192 aa).

Over 1-8 (MILNRRIQ) the chain is Cytoplasmic. The helical; Signal-anchor transmembrane segment at 9-29 (VILPTLLILSFIIWIFHSVMV) threads the bilayer. Residues 30 to 192 (DKDWRLFMPE…VINEDHDYSG (163 aa)) lie on the Lumenal side of the membrane. An ERV/ALR sulfhydryl oxidase domain is found at 61–162 (HDNNTNNLMV…TSCDGFNERY (102 aa)). 5 residues coordinate FAD: Trp-74, Cys-138, His-141, Asn-145, and Tyr-162. Cys-138 and Cys-155 are joined by a disulfide.

FAD is required as a cofactor.

The protein resides in the endoplasmic reticulum membrane. It localises to the cytoplasm. Its subcellular location is the nucleus. It catalyses the reaction 2 R'C(R)SH + O2 = R'C(R)S-S(R)CR' + H2O2. Its function is as follows. FAD-dependent sulfhydryl oxidase that catalyzes disulfide bond formation in the endoplasmic reticulum lumen. The polypeptide is FAD-linked sulfhydryl oxidase erv2 (erv2) (Schizosaccharomyces pombe (strain 972 / ATCC 24843) (Fission yeast)).